The sequence spans 291 residues: Pantothenate synthetase (291 aa).

30 to 37 (MGALHAGH) serves as a coordination point for ATP. His37 (proton donor) is an active-site residue. Residue Gln61 coordinates (R)-pantoate. Beta-alanine is bound at residue Gln61. ATP is bound at residue 147–150 (GQKD). Position 153 (Gln153) interacts with (R)-pantoate. ATP contacts are provided by residues Val176 and 184–187 (LSSR).

The protein belongs to the pantothenate synthetase family. As to quaternary structure, homodimer.

It is found in the cytoplasm. The enzyme catalyses (R)-pantoate + beta-alanine + ATP = (R)-pantothenate + AMP + diphosphate + H(+). Its pathway is cofactor biosynthesis; (R)-pantothenate biosynthesis; (R)-pantothenate from (R)-pantoate and beta-alanine: step 1/1. Its function is as follows. Catalyzes the condensation of pantoate with beta-alanine in an ATP-dependent reaction via a pantoyl-adenylate intermediate. In Koribacter versatilis (strain Ellin345), this protein is Pantothenate synthetase.